Consider the following 281-residue polypeptide: Pantothenate synthetase (281 aa).

Position 30 to 37 (30 to 37 (MGNLHLGH)) interacts with ATP. Residue His37 is the Proton donor of the active site. Gln61 lines the (R)-pantoate pocket. Residue Gln61 participates in beta-alanine binding. 149–152 (GRKD) provides a ligand contact to ATP. Gln155 serves as a coordination point for (R)-pantoate. ATP is bound by residues Ile178 and 186 to 189 (MSSR).

The protein belongs to the pantothenate synthetase family. Homodimer.

It localises to the cytoplasm. It catalyses the reaction (R)-pantoate + beta-alanine + ATP = (R)-pantothenate + AMP + diphosphate + H(+). It participates in cofactor biosynthesis; (R)-pantothenate biosynthesis; (R)-pantothenate from (R)-pantoate and beta-alanine: step 1/1. Functionally, catalyzes the condensation of pantoate with beta-alanine in an ATP-dependent reaction via a pantoyl-adenylate intermediate. The protein is Pantothenate synthetase of Shewanella sediminis (strain HAW-EB3).